The chain runs to 904 residues: Protein translocase subunit SecA (904 aa).

ATP-binding positions include glutamine 87, 105 to 109 (GEGKT), and aspartate 512. The tract at residues 851–904 (LAKQQQLSHESDNSALMSQEEANVAASLERKVGRNDPCPCGSGKKYKQCHGRLQ) is disordered. Positions 853 to 871 (KQQQLSHESDNSALMSQEE) are enriched in polar residues. Zn(2+) contacts are provided by cysteine 888, cysteine 890, cysteine 899, and histidine 900. The segment covering 894–904 (KKYKQCHGRLQ) has biased composition (basic residues).

The protein belongs to the SecA family. In terms of assembly, monomer and homodimer. Part of the essential Sec protein translocation apparatus which comprises SecA, SecYEG and auxiliary proteins SecDF-YajC and YidC. It depends on Zn(2+) as a cofactor.

Its subcellular location is the cell inner membrane. The protein localises to the cytoplasm. It catalyses the reaction ATP + H2O + cellular proteinSide 1 = ADP + phosphate + cellular proteinSide 2.. Part of the Sec protein translocase complex. Interacts with the SecYEG preprotein conducting channel. Has a central role in coupling the hydrolysis of ATP to the transfer of proteins into and across the cell membrane, serving both as a receptor for the preprotein-SecB complex and as an ATP-driven molecular motor driving the stepwise translocation of polypeptide chains across the membrane. This chain is Protein translocase subunit SecA, found in Yersinia enterocolitica serotype O:8 / biotype 1B (strain NCTC 13174 / 8081).